Consider the following 224-residue polypeptide: Pyridoxal 5'-phosphate synthase subunit PdxT (224 aa).

Residue 55 to 57 (GES) participates in L-glutamine binding. Cysteine 87 functions as the Nucleophile in the catalytic mechanism. Residues arginine 113 and 142–143 (IR) contribute to the L-glutamine site. Catalysis depends on charge relay system residues histidine 178 and glutamate 180.

Belongs to the glutaminase PdxT/SNO family. In terms of assembly, in the presence of PdxS, forms a dodecamer of heterodimers. Only shows activity in the heterodimer.

It carries out the reaction aldehydo-D-ribose 5-phosphate + D-glyceraldehyde 3-phosphate + L-glutamine = pyridoxal 5'-phosphate + L-glutamate + phosphate + 3 H2O + H(+). It catalyses the reaction L-glutamine + H2O = L-glutamate + NH4(+). The protein operates within cofactor biosynthesis; pyridoxal 5'-phosphate biosynthesis. Catalyzes the hydrolysis of glutamine to glutamate and ammonia as part of the biosynthesis of pyridoxal 5'-phosphate. The resulting ammonia molecule is channeled to the active site of PdxS. In Syntrophus aciditrophicus (strain SB), this protein is Pyridoxal 5'-phosphate synthase subunit PdxT.